The chain runs to 374 residues: Queuine tRNA-ribosyltransferase (374 aa).

D89 (proton acceptor) is an active-site residue. Substrate contacts are provided by residues 89–93 (DSGGF), D143, Q187, and G214. Positions 245–251 (GVGKPED) are RNA binding. Residue D264 is the Nucleophile of the active site. Positions 269-273 (TRNAR) are RNA binding; important for wobble base 34 recognition. Residues C302, C304, C307, and H333 each contribute to the Zn(2+) site.

It belongs to the queuine tRNA-ribosyltransferase family. In terms of assembly, homodimer. Within each dimer, one monomer is responsible for RNA recognition and catalysis, while the other monomer binds to the replacement base PreQ1. Zn(2+) is required as a cofactor.

The catalysed reaction is 7-aminomethyl-7-carbaguanine + guanosine(34) in tRNA = 7-aminomethyl-7-carbaguanosine(34) in tRNA + guanine. It participates in tRNA modification; tRNA-queuosine biosynthesis. Functionally, catalyzes the base-exchange of a guanine (G) residue with the queuine precursor 7-aminomethyl-7-deazaguanine (PreQ1) at position 34 (anticodon wobble position) in tRNAs with GU(N) anticodons (tRNA-Asp, -Asn, -His and -Tyr). Catalysis occurs through a double-displacement mechanism. The nucleophile active site attacks the C1' of nucleotide 34 to detach the guanine base from the RNA, forming a covalent enzyme-RNA intermediate. The proton acceptor active site deprotonates the incoming PreQ1, allowing a nucleophilic attack on the C1' of the ribose to form the product. After dissociation, two additional enzymatic reactions on the tRNA convert PreQ1 to queuine (Q), resulting in the hypermodified nucleoside queuosine (7-(((4,5-cis-dihydroxy-2-cyclopenten-1-yl)amino)methyl)-7-deazaguanosine). In Shewanella baltica (strain OS185), this protein is Queuine tRNA-ribosyltransferase.